The primary structure comprises 125 residues: Small ribosomal subunit protein eS8 (125 aa).

Residues 1 to 30 are disordered; it reads MTIFQGRATRKPSGGKLRPNHSKRRYELGR.

This sequence belongs to the eukaryotic ribosomal protein eS8 family. In terms of assembly, part of the 30S ribosomal subunit.

This chain is Small ribosomal subunit protein eS8, found in Picrophilus torridus (strain ATCC 700027 / DSM 9790 / JCM 10055 / NBRC 100828 / KAW 2/3).